The following is a 63-amino-acid chain: Cytochrome c oxidase subunit 7C, mitochondrial (63 aa).

A mitochondrion-targeting transit peptide spans 1 to 16; that stretch reads MLGQSIRRFTTSVVRR. Topologically, residues 17-33 are mitochondrial matrix; it reads SHYEEGPGKNLPFSVEN. Lys-25 is modified (N6-acetyllysine; alternate). An N6-succinyllysine; alternate modification is found at Lys-25. The helical transmembrane segment at 34–60 threads the bilayer; sequence KWRLLAMMTLYFGSGFAAPFFIVRHQL. The Mitochondrial intermembrane segment spans residues 61–63; the sequence is LKK.

The protein belongs to the cytochrome c oxidase VIIc family. In terms of assembly, component of the cytochrome c oxidase (complex IV, CIV), a multisubunit enzyme composed of 14 subunits. The complex is composed of a catalytic core of 3 subunits MT-CO1, MT-CO2 and MT-CO3, encoded in the mitochondrial DNA, and 11 supernumerary subunits COX4I, COX5A, COX5B, COX6A, COX6B, COX6C, COX7A, COX7B, COX7C, COX8 and NDUFA4, which are encoded in the nuclear genome. The complex exists as a monomer or a dimer and forms supercomplexes (SCs) in the inner mitochondrial membrane with NADH-ubiquinone oxidoreductase (complex I, CI) and ubiquinol-cytochrome c oxidoreductase (cytochrome b-c1 complex, complex III, CIII), resulting in different assemblies (supercomplex SCI(1)III(2)IV(1) and megacomplex MCI(2)III(2)IV(2)). Interacts with RAB5IF.

The protein resides in the mitochondrion inner membrane. It functions in the pathway energy metabolism; oxidative phosphorylation. Component of the cytochrome c oxidase, the last enzyme in the mitochondrial electron transport chain which drives oxidative phosphorylation. The respiratory chain contains 3 multisubunit complexes succinate dehydrogenase (complex II, CII), ubiquinol-cytochrome c oxidoreductase (cytochrome b-c1 complex, complex III, CIII) and cytochrome c oxidase (complex IV, CIV), that cooperate to transfer electrons derived from NADH and succinate to molecular oxygen, creating an electrochemical gradient over the inner membrane that drives transmembrane transport and the ATP synthase. Cytochrome c oxidase is the component of the respiratory chain that catalyzes the reduction of oxygen to water. Electrons originating from reduced cytochrome c in the intermembrane space (IMS) are transferred via the dinuclear copper A center (CU(A)) of subunit 2 and heme A of subunit 1 to the active site in subunit 1, a binuclear center (BNC) formed by heme A3 and copper B (CU(B)). The BNC reduces molecular oxygen to 2 water molecules using 4 electrons from cytochrome c in the IMS and 4 protons from the mitochondrial matrix. The protein is Cytochrome c oxidase subunit 7C, mitochondrial (COX7C) of Sus scrofa (Pig).